Here is a 421-residue protein sequence, read N- to C-terminus: MAESWLRLSGAGPAEEAGPEGGLEEPDALDDSLTSLQWLQEFSILNAKAPALPPGGTDPHGYHQVPGSAAPGSPLAADPACLGQPHTPGKPTSSCTSRSAPPGLQAPPPDDVDYATNPHVKPPYSYATLICMAMQASKATKITLSAIYKWITDNFCYFRHADPTWQNSIRHNLSLNKCFIKVPREKDEPGKGGFWRIDPQYAERLLSGAFKKRRLPPVHIHPAFARQAAQEPSAVPRAGPLTVNTEAQQLLREFEEATGEAGWGAGEGRLGHKRKQPLPKRVAKVPRPPSTLLPTPEEQGELEPLKGNFDWEAIFDAGTLGGELGALEALELSPPLSPASHVDVDLTIHGRHIDCPATWGPSVEQAADSLDFDETFLATSFLQHPWDESGSGCLPPEPLFEAGDATLASDLQDWASVGAFL.

Disordered stretches follow at residues 1–34 (MAESWLRLSGAGPAEEAGPEGGLEEPDALDDSLT) and 48–116 (KAPA…DYAT). Positions 66–80 (PGSAAPGSPLAADPA) are enriched in low complexity. Residues 90 to 99 (KPTSSCTSRS) are compositionally biased toward polar residues. Residues 120–210 (VKPPYSYATL…YAERLLSGAF (91 aa)) constitute a DNA-binding region (fork-head). The disordered stretch occupies residues 261-302 (AGWGAGEGRLGHKRKQPLPKRVAKVPRPPSTLLPTPEEQGEL). Residues 271 to 284 (GHKRKQPLPKRVAK) are compositionally biased toward basic residues.

This sequence belongs to the FOXJ1 family. Testis, oviduct, lung and brain cortex.

The protein localises to the nucleus. Its function is as follows. Transcription factor specifically required for the formation of motile cilia. Acts by activating transcription of genes that mediate assembly of motile cilia, such as CFAP157. Binds the DNA consensus sequences 5'-HWDTGTTTGTTTA-3' or 5'-KTTTGTTGTTKTW-3' (where H is not G, W is A or T, D is not C, and K is G or T). Activates the transcription of a variety of ciliary proteins in the developing brain and lung. The sequence is that of Forkhead box protein J1 from Homo sapiens (Human).